A 588-amino-acid polypeptide reads, in one-letter code: Adenine deaminase (588 aa).

It belongs to the metallo-dependent hydrolases superfamily. Adenine deaminase family. As to quaternary structure, homodimer. Mn(2+) serves as cofactor.

The catalysed reaction is adenine + H2O + H(+) = hypoxanthine + NH4(+). This is Adenine deaminase from Escherichia coli O17:K52:H18 (strain UMN026 / ExPEC).